We begin with the raw amino-acid sequence, 553 residues long: Dihydrolipoyllysine-residue acetyltransferase component of pyruvate dehydrogenase complex (553 aa).

The Lipoyl-binding 1 domain occupies alanine 4–glutamate 78. Lysine 44 is modified (N6-lipoyllysine). Residues alanine 97 to glycine 118 form a disordered region. The Lipoyl-binding 2 domain occupies threonine 122–glutamate 196. The residue at position 162 (lysine 162) is an N6-lipoyllysine. The region spanning histidine 250–valine 287 is the Peripheral subunit-binding (PSBD) domain. Histidine 526 is a catalytic residue.

It belongs to the 2-oxoacid dehydrogenase family. Forms a 24-polypeptide structural core with octahedral symmetry. The cofactor is (R)-lipoate.

The enzyme catalyses N(6)-[(R)-dihydrolipoyl]-L-lysyl-[protein] + acetyl-CoA = N(6)-[(R)-S(8)-acetyldihydrolipoyl]-L-lysyl-[protein] + CoA. Functionally, the pyruvate dehydrogenase complex catalyzes the overall conversion of pyruvate to acetyl-CoA and CO(2). It contains multiple copies of three enzymatic components: pyruvate dehydrogenase (E1), dihydrolipoamide acetyltransferase (E2) and lipoamide dehydrogenase (E3). This chain is Dihydrolipoyllysine-residue acetyltransferase component of pyruvate dehydrogenase complex (pdhB), found in Cupriavidus necator (strain ATCC 17699 / DSM 428 / KCTC 22496 / NCIMB 10442 / H16 / Stanier 337) (Ralstonia eutropha).